Consider the following 95-residue polypeptide: Large ribosomal subunit protein bL25 (95 aa).

Belongs to the bacterial ribosomal protein bL25 family. In terms of assembly, part of the 50S ribosomal subunit; part of the 5S rRNA/L5/L18/L25 subcomplex. Contacts the 5S rRNA. Binds to the 5S rRNA independently of L5 and L18.

Functionally, this is one of the proteins that binds to the 5S RNA in the ribosome where it forms part of the central protuberance. The polypeptide is Large ribosomal subunit protein bL25 (Shewanella sp. (strain ANA-3)).